The chain runs to 638 residues: Actin-regulating kinase 1 (638 aa).

A Protein kinase domain is found at 22-298 (VEIIKYLTSG…VYQLLKRISI (277 aa)). ATP is bound by residues 28 to 36 (LTSGGFAQV) and K56. Residue D159 is the Proton acceptor of the active site. S478 is subject to Phosphoserine. Over residues 482 to 515 (YSTRGNIKKNQSVKESLTSSSLPGTSFTPTSTKV) the composition is skewed to polar residues. Residues 482-518 (YSTRGNIKKNQSVKESLTSSSLPGTSFTPTSTKVNLK) form a disordered region. Phosphoserine occurs at positions 522 and 535. Residues 569 to 638 (SEESFNARKM…LAGRKLSLDK (70 aa)) form a disordered region. Residues 582–593 (KLHEKGEIDKPT) show a composition bias toward basic and acidic residues. Residues 602 to 615 (SKDKKTKPTPPPKP) form an interaction with SH3 domain of ABP1 region.

This sequence belongs to the protein kinase superfamily. Ser/Thr protein kinase family. In terms of assembly, interacts with ABP1, which is required for proper actin patch localization.

Its subcellular location is the cytoplasm. The protein localises to the cytoskeleton. It is found in the actin patch. The enzyme catalyses L-seryl-[protein] + ATP = O-phospho-L-seryl-[protein] + ADP + H(+). It catalyses the reaction L-threonyl-[protein] + ATP = O-phospho-L-threonyl-[protein] + ADP + H(+). Involved in regulation of actin cytoskeleton organization and endocytosis. In Saccharomyces cerevisiae (strain ATCC 204508 / S288c) (Baker's yeast), this protein is Actin-regulating kinase 1 (ARK1).